The chain runs to 238 residues: tRNA (guanine-N(7)-)-methyltransferase (238 aa).

S-adenosyl-L-methionine contacts are provided by Glu-68, Glu-93, Asp-120, and Asp-143. The active site involves Asp-143. Residues Lys-147, Asp-179, and 216-219 each bind substrate; that span reads TKFE.

The protein belongs to the class I-like SAM-binding methyltransferase superfamily. TrmB family.

The catalysed reaction is guanosine(46) in tRNA + S-adenosyl-L-methionine = N(7)-methylguanosine(46) in tRNA + S-adenosyl-L-homocysteine. The protein operates within tRNA modification; N(7)-methylguanine-tRNA biosynthesis. Functionally, catalyzes the formation of N(7)-methylguanine at position 46 (m7G46) in tRNA. The chain is tRNA (guanine-N(7)-)-methyltransferase from Aliivibrio salmonicida (strain LFI1238) (Vibrio salmonicida (strain LFI1238)).